A 320-amino-acid chain; its full sequence is Ferrochelatase (320 aa).

Fe cation-binding residues include H194 and E275.

Belongs to the ferrochelatase family. As to quaternary structure, monomer.

It localises to the cytoplasm. The enzyme catalyses heme b + 2 H(+) = protoporphyrin IX + Fe(2+). The protein operates within porphyrin-containing compound metabolism; protoheme biosynthesis; protoheme from protoporphyrin-IX: step 1/1. Functionally, catalyzes the ferrous insertion into protoporphyrin IX. The sequence is that of Ferrochelatase from Salmonella typhi.